The sequence spans 486 residues: Protein nucleotidyltransferase YdiU (486 aa).

ATP is bound by residues glycine 89, glycine 91, arginine 92, lysine 112, aspartate 124, glycine 125, arginine 175, and arginine 182. The Proton acceptor role is filled by aspartate 251. Residues asparagine 252 and aspartate 261 each coordinate Mg(2+). Aspartate 261 lines the ATP pocket.

This sequence belongs to the SELO family. Mg(2+) is required as a cofactor. Requires Mn(2+) as cofactor.

It carries out the reaction L-seryl-[protein] + ATP = 3-O-(5'-adenylyl)-L-seryl-[protein] + diphosphate. The enzyme catalyses L-threonyl-[protein] + ATP = 3-O-(5'-adenylyl)-L-threonyl-[protein] + diphosphate. It catalyses the reaction L-tyrosyl-[protein] + ATP = O-(5'-adenylyl)-L-tyrosyl-[protein] + diphosphate. The catalysed reaction is L-histidyl-[protein] + UTP = N(tele)-(5'-uridylyl)-L-histidyl-[protein] + diphosphate. It carries out the reaction L-seryl-[protein] + UTP = O-(5'-uridylyl)-L-seryl-[protein] + diphosphate. The enzyme catalyses L-tyrosyl-[protein] + UTP = O-(5'-uridylyl)-L-tyrosyl-[protein] + diphosphate. Nucleotidyltransferase involved in the post-translational modification of proteins. It can catalyze the addition of adenosine monophosphate (AMP) or uridine monophosphate (UMP) to a protein, resulting in modifications known as AMPylation and UMPylation. The polypeptide is Protein nucleotidyltransferase YdiU (Shouchella clausii (strain KSM-K16) (Alkalihalobacillus clausii)).